A 238-amino-acid polypeptide reads, in one-letter code: 1-(5-phosphoribosyl)-5-[(5-phosphoribosylamino)methylideneamino] imidazole-4-carboxamide isomerase (238 aa).

The active-site Proton acceptor is Asp-8. Asp-130 acts as the Proton donor in catalysis.

This sequence belongs to the HisA/HisF family.

It localises to the cytoplasm. It carries out the reaction 1-(5-phospho-beta-D-ribosyl)-5-[(5-phospho-beta-D-ribosylamino)methylideneamino]imidazole-4-carboxamide = 5-[(5-phospho-1-deoxy-D-ribulos-1-ylimino)methylamino]-1-(5-phospho-beta-D-ribosyl)imidazole-4-carboxamide. The protein operates within amino-acid biosynthesis; L-histidine biosynthesis; L-histidine from 5-phospho-alpha-D-ribose 1-diphosphate: step 4/9. In Methanococcus maripaludis (strain C5 / ATCC BAA-1333), this protein is 1-(5-phosphoribosyl)-5-[(5-phosphoribosylamino)methylideneamino] imidazole-4-carboxamide isomerase.